Consider the following 123-residue polypeptide: Large ribosomal subunit protein bL12 (123 aa).

The protein belongs to the bacterial ribosomal protein bL12 family. As to quaternary structure, homodimer. Part of the ribosomal stalk of the 50S ribosomal subunit. Forms a multimeric L10(L12)X complex, where L10 forms an elongated spine to which 2 to 4 L12 dimers bind in a sequential fashion. Binds GTP-bound translation factors.

Functionally, forms part of the ribosomal stalk which helps the ribosome interact with GTP-bound translation factors. Is thus essential for accurate translation. This is Large ribosomal subunit protein bL12 from Shewanella sp. (strain MR-4).